The sequence spans 41 residues: MKVVSSIKSAKKRHPACQVVRRRGKIYVINKVEPRYKARQG.

The protein belongs to the bacterial ribosomal protein bL36 family.

This chain is Large ribosomal subunit protein bL36, found in Opitutus terrae (strain DSM 11246 / JCM 15787 / PB90-1).